We begin with the raw amino-acid sequence, 158 residues long: Ribosome maturation factor RimP (158 aa).

The protein belongs to the RimP family.

Its subcellular location is the cytoplasm. Functionally, required for maturation of 30S ribosomal subunits. This is Ribosome maturation factor RimP from Streptococcus uberis (strain ATCC BAA-854 / 0140J).